A 161-amino-acid chain; its full sequence is UPF0506 protein SJCHGC02965 (161 aa).

The first 13 residues, Gln1–Ser13, serve as a signal peptide directing secretion. Asn15, Asn19, Asn31, Asn43, Asn47, Asn59, Asn63, Asn75, and Asn121 each carry an N-linked (GlcNAc...) asparagine glycan. Disulfide bonds link Cys127-Cys141, Cys134-Cys145, and Cys140-Cys150.

This sequence belongs to the UPF0506 family.

Its subcellular location is the secreted. This chain is UPF0506 protein SJCHGC02965, found in Schistosoma japonicum (Blood fluke).